Consider the following 279-residue polypeptide: MSKRLKILLTNDDGISAKGMSLLVSNLLKADFADLYVVAPSTEQSGKSMSFSYTQPVSIESVDYPQEVAGAWAVSGSPVDCVKLALGDLFYDSFPDLVLSGINHGSNAGRNIFYSGTAGAAMEAILSGVPSIAFSQEQHISFFQTDSAPELLRKLSFYALSNPFPVVTGFNVNFPASERNEPWKGMRLVATGKEFACGLPKLLSSDGKRKSFSLSDCQVVMDEDISEECRCLLDNYITVVPLLVRNSPLALTSESEFQQLQETFQEFMCSEADTRLFDV.

Residues Asp-12, Asp-13, Ser-45, and Asn-103 each contribute to the a divalent metal cation site.

This sequence belongs to the SurE nucleotidase family. A divalent metal cation serves as cofactor.

Its subcellular location is the cytoplasm. It carries out the reaction a ribonucleoside 5'-phosphate + H2O = a ribonucleoside + phosphate. Functionally, nucleotidase that shows phosphatase activity on nucleoside 5'-monophosphates. This Chlamydia caviae (strain ATCC VR-813 / DSM 19441 / 03DC25 / GPIC) (Chlamydophila caviae) protein is 5'-nucleotidase SurE 1.